We begin with the raw amino-acid sequence, 163 residues long: MEISPYCLLSLLPIFLLSGFSLSYDEFDGHAATSRALLQTRTTCKEDFANKNYTIITSRCKGPNYPANVCCSAFKDFACPFAEVLNDEKNDCASTMFSYINLYGRYPPGIFANMCKEGKEGLDCTDVTQSASATSDSIPRASTTASLAVLSTFLVLCLLFLSS.

An N-terminal signal peptide occupies residues 1 to 23; it reads MEISPYCLLSLLPIFLLSGFSLS. Residue Asn-52 is glycosylated (N-linked (GlcNAc...) asparagine). A lipid anchor (GPI-anchor amidated serine) is attached at Ser-135. A propeptide spans 136-163 (removed in mature form); sequence DSIPRASTTASLAVLSTFLVLCLLFLSS.

As to expression, expressed in pollen, pollen tubes, sporophytic pistil tissues, in the early stages of female gametophyte development, and in unfertilized, mature ovules.

It is found in the cell membrane. This Arabidopsis thaliana (Mouse-ear cress) protein is GPI-anchored protein LLG2.